A 432-amino-acid polypeptide reads, in one-letter code: Adenylosuccinate synthetase (432 aa).

Residues 13 to 19 and 41 to 43 contribute to the GTP site; these read GDEGKGK and GHT. Residue Asp-14 is the Proton acceptor of the active site. 2 residues coordinate Mg(2+): Asp-14 and Gly-41. Residues 14–17, 39–42, Thr-130, Arg-144, Gln-225, Thr-240, and Arg-304 contribute to the IMP site; these read DEGK and NAGH. His-42 acts as the Proton donor in catalysis. 300 to 306 provides a ligand contact to substrate; it reads AVTGRPR. GTP-binding positions include Arg-306, 332–334, and 415–417; these read KLD and STG.

It belongs to the adenylosuccinate synthetase family. In terms of assembly, homodimer. Requires Mg(2+) as cofactor.

It localises to the cytoplasm. The catalysed reaction is IMP + L-aspartate + GTP = N(6)-(1,2-dicarboxyethyl)-AMP + GDP + phosphate + 2 H(+). Its pathway is purine metabolism; AMP biosynthesis via de novo pathway; AMP from IMP: step 1/2. Functionally, plays an important role in the de novo pathway of purine nucleotide biosynthesis. Catalyzes the first committed step in the biosynthesis of AMP from IMP. The chain is Adenylosuccinate synthetase from Histophilus somni (strain 2336) (Haemophilus somnus).